Reading from the N-terminus, the 396-residue chain is NADH-quinone oxidoreductase subunit D (396 aa).

Belongs to the complex I 49 kDa subunit family. NDH-1 is composed of 14 different subunits. Subunits NuoB, C, D, E, F, and G constitute the peripheral sector of the complex.

It is found in the cell inner membrane. It catalyses the reaction a quinone + NADH + 5 H(+)(in) = a quinol + NAD(+) + 4 H(+)(out). Its function is as follows. NDH-1 shuttles electrons from NADH, via FMN and iron-sulfur (Fe-S) centers, to quinones in the respiratory chain. The immediate electron acceptor for the enzyme in this species is believed to be ubiquinone. Couples the redox reaction to proton translocation (for every two electrons transferred, four hydrogen ions are translocated across the cytoplasmic membrane), and thus conserves the redox energy in a proton gradient. The polypeptide is NADH-quinone oxidoreductase subunit D (Orientia tsutsugamushi (strain Boryong) (Rickettsia tsutsugamushi)).